Consider the following 272-residue polypeptide: ATP synthase subunit a (272 aa).

5 helical membrane-spanning segments follow: residues 41–61 (TLNI…LALF), 102–122 (IAPL…MDLV), 147–167 (DVNI…FYSI), 212–232 (LFGN…LLPW), and 243–263 (AIFH…LTIV).

The protein belongs to the ATPase A chain family. As to quaternary structure, F-type ATPases have 2 components, CF(1) - the catalytic core - and CF(0) - the membrane proton channel. CF(1) has five subunits: alpha(3), beta(3), gamma(1), delta(1), epsilon(1). CF(0) has three main subunits: a(1), b(2) and c(9-12). The alpha and beta chains form an alternating ring which encloses part of the gamma chain. CF(1) is attached to CF(0) by a central stalk formed by the gamma and epsilon chains, while a peripheral stalk is formed by the delta and b chains.

It localises to the cell inner membrane. In terms of biological role, key component of the proton channel; it plays a direct role in the translocation of protons across the membrane. In Edwardsiella ictaluri (strain 93-146), this protein is ATP synthase subunit a.